Consider the following 220-residue polypeptide: Zinc finger protein 36 (220 aa).

The C2H2-type 1 zinc finger occupies 73 to 95 (FRCTVCGKAFASYQALGGHKSSH). Residues 90–134 (GHKSSHRKPPSPGDHYGAAAAAQQLASAGDSKEDSASSAAGSTGP) form a disordered region. Positions 107–117 (AAAAAQQLASA) are enriched in low complexity. The C2H2-type 2 zinc-finger motif lies at 135–157 (HRCTICRRSFATGQALGGHKRCH).

Its function is as follows. Probable transcription factor involved in abscisic acid (ABA) signaling. Required for the regulation of the cross-talk between NADPH oxidase, hydrogen peroxide and MAP kinase in ABA signaling. Regulates the expression of the NADPH oxidase genes RBOHB and RBOHE, and the MAPK genes MPK1, MPK4, MPK5, MPK7 and MPK14. Regulates ABA-induced hydrogen peroxide production and antioxidant defense. Required for tolerance to water stress and oxidative stress. In Oryza sativa subsp. japonica (Rice), this protein is Zinc finger protein 36.